Consider the following 591-residue polypeptide: Probable auxin efflux carrier component 3b (591 aa).

The Extracellular segment spans residues 1–6; the sequence is MISWHE. A helical transmembrane segment spans residues 7–27; it reads LYMVLSAVVPLYVAMMVAYGS. Topologically, residues 28–38 are cytoplasmic; sequence VRWWGVLTPEQ. The helical transmembrane segment at 39–59 threads the bilayer; that stretch reads CSGINRFVAVIAVPLLSFHFI. Valine 51 contributes to the (indol-3-yl)acetate binding site. Residues 60 to 70 are Extracellular-facing; sequence SSSDPYAMNLR. Residues 71-93 traverse the membrane as a helical segment; sequence FVAADTLQKVLVLAALAAWSRFP. The Cytoplasmic portion of the chain corresponds to 94 to 107; sequence ARFVPPAWPPLDCS. Residues 108–128 traverse the membrane as a helical segment; sequence ITLFSVSTLPNTLVMGIPLLV. The (indol-3-yl)acetate site is built by asparagine 118 and leucine 120. The Extracellular segment spans residues 129 to 137; sequence SMYGPYSGD. A helical transmembrane segment spans residues 138 to 158; sequence LMVQIVVLQSIVWYTLLLFLF. Tyrosine 151 lines the (indol-3-yl)acetate pocket. Residues 159–450 are Cytoplasmic-facing; that stretch reads EFRAARVLIA…LIRNPNTYAS (292 aa). Composition is skewed to polar residues over residues 243–254 and 283–292; these read SRNATPRGSTFT and SSSRQHTPRP. Disordered stretches follow at residues 243–269, 283–313, 344–374, and 392–420; these read SRNA…SALR, SSSR…APTN, ETRR…GERA, and AGAK…RARG. The segment covering 395–407 has biased composition (low complexity); it reads KTEQQTTAVTTTT. The chain crosses the membrane as a helical span at residues 451–471; sequence LIGLTWSLIAFRFHITMPIIV. Over 472 to 474 the chain is Extracellular; that stretch reads AKS. A helical transmembrane segment spans residues 475 to 495; it reads ISILSDAGLGMAMFSLGLFMA. The Cytoplasmic portion of the chain corresponds to 496–511; the sequence is TQPKIIACGYSVAAAS. Residues 512–532 traverse the membrane as a helical segment; it reads MGVRFFFGPAIMAAASAAVGI. Topologically, residues 533–535 are extracellular; that stretch reads RGT. A helical membrane pass occupies residues 536 to 556; the sequence is LLRIAIVQAALPQGIVPFVFA. (indol-3-yl)acetate-binding residues include isoleucine 550 and valine 551. Over 557–568 the chain is Cytoplasmic; that stretch reads KEYNLHATILCT. The helical transmembrane segment at 569–589 threads the bilayer; the sequence is LVIFGMLIALPITLVYYIILG. At 590–591 the chain is on the extracellular side; that stretch reads LL.

This sequence belongs to the auxin efflux carrier (TC 2.A.69.1) family. In terms of assembly, homodimer. In terms of tissue distribution, expressed in stem bases and leaves.

Its subcellular location is the membrane. May act as a component of the auxin efflux carrier. The chain is Probable auxin efflux carrier component 3b from Oryza sativa subsp. japonica (Rice).